A 552-amino-acid polypeptide reads, in one-letter code: uncharacterized protein (552 aa).

An ATP-binding site is contributed by 29 to 36 (GENAWGKS). One can recognise a Toprim domain in the interval 379–469 (RCWLLVEGET…AEREHLTALP (91 aa)).

This is an uncharacterized protein from Escherichia coli (strain K12).